A 367-amino-acid polypeptide reads, in one-letter code: Quinolinate synthase (367 aa).

Iminosuccinate-binding residues include His45 and Ser62. Cys109 serves as a coordination point for [4Fe-4S] cluster. Residues 140–142 (YVN) and Ser161 each bind iminosuccinate. Cys229 serves as a coordination point for [4Fe-4S] cluster. Iminosuccinate-binding positions include 255–257 (HPE) and Thr272. Cys319 is a [4Fe-4S] cluster binding site.

This sequence belongs to the quinolinate synthase family. Type 3 subfamily. It depends on [4Fe-4S] cluster as a cofactor.

The protein resides in the cytoplasm. It carries out the reaction iminosuccinate + dihydroxyacetone phosphate = quinolinate + phosphate + 2 H2O + H(+). Its pathway is cofactor biosynthesis; NAD(+) biosynthesis; quinolinate from iminoaspartate: step 1/1. Functionally, catalyzes the condensation of iminoaspartate with dihydroxyacetone phosphate to form quinolinate. In Geobacillus thermodenitrificans (strain NG80-2), this protein is Quinolinate synthase.